A 463-amino-acid chain; its full sequence is MSTESQHLYSQLPAIDRLLRDPAIEPLVAQHGQTLISELLRQLQLQARETIKQHQRLPDWCADWPQALGARLAQQQRPSLAPVFNLSGTVLHTNLGRALLAQPAIEAVTRSMGAAVTLEYDLDGAGRGHRDRAVADLLCQLTGAEDACIVNNNAAAVLLMLAAIAPGKQVVVSRGELVEIGGAFRIPDVMRQAGCQLVEVGTTNRTHLKDYRNAINDQTGLLMKVHTSNYSIQGFTAAVDEAELAQLGAEHGLPTATDLGSGSLIDMAQYGLPAEPMPQRLLAAGVDLVTFSGDKLLGGPQAGIIVGKKALIARLQQHPLKRALRVGKLTLAALEATLRLYQQPELLGQQLPTLRLLTRPQQAMQAAAERLLQVLTPQFTGHFQLRAEPCWSQIGSGSLPVDRLPSYALTFTPQDGRGATLEALAERWRALPQPVIGRINDGRLWLDLRCLEQEDALIEALSA.

K295 carries the post-translational modification N6-(pyridoxal phosphate)lysine.

It belongs to the SelA family. As to quaternary structure, homodecamer; pentamer of dimers. Binds only one seryl-tRNA(Sec) per dimer. Requires pyridoxal 5'-phosphate as cofactor.

The protein resides in the cytoplasm. The catalysed reaction is L-seryl-tRNA(Sec) + selenophosphate + H(+) = L-selenocysteinyl-tRNA(Sec) + phosphate. The protein operates within aminoacyl-tRNA biosynthesis; selenocysteinyl-tRNA(Sec) biosynthesis; selenocysteinyl-tRNA(Sec) from L-seryl-tRNA(Sec) (bacterial route): step 1/1. Functionally, converts seryl-tRNA(Sec) to selenocysteinyl-tRNA(Sec) required for selenoprotein biosynthesis. In Serratia proteamaculans (strain 568), this protein is L-seryl-tRNA(Sec) selenium transferase.